A 282-amino-acid polypeptide reads, in one-letter code: Pantothenate synthetase (282 aa).

An ATP-binding site is contributed by 30-37; that stretch reads MGYLHEGH. His-37 acts as the Proton donor in catalysis. A (R)-pantoate-binding site is contributed by Gln-61. Gln-61 contributes to the beta-alanine binding site. 147 to 150 is an ATP binding site; that stretch reads GMKD. Gln-153 is a binding site for (R)-pantoate. ATP contacts are provided by residues Val-176 and 184-187; that span reads KSSR.

The protein belongs to the pantothenate synthetase family. In terms of assembly, homodimer.

Its subcellular location is the cytoplasm. The enzyme catalyses (R)-pantoate + beta-alanine + ATP = (R)-pantothenate + AMP + diphosphate + H(+). Its pathway is cofactor biosynthesis; (R)-pantothenate biosynthesis; (R)-pantothenate from (R)-pantoate and beta-alanine: step 1/1. In terms of biological role, catalyzes the condensation of pantoate with beta-alanine in an ATP-dependent reaction via a pantoyl-adenylate intermediate. The sequence is that of Pantothenate synthetase from Bacillus anthracis (strain A0248).